We begin with the raw amino-acid sequence, 475 residues long: Ribulose bisphosphate carboxylase large chain (475 aa).

A propeptide spanning residues 1-2 (MS) is cleaved from the precursor. An N-acetylproline modification is found at Pro-3. An N6,N6,N6-trimethyllysine modification is found at Lys-14. Residues Asn-123 and Thr-173 each contribute to the substrate site. The active-site Proton acceptor is the Lys-175. Lys-177 lines the substrate pocket. Lys-201, Asp-203, and Glu-204 together coordinate Mg(2+). An N6-carboxylysine modification is found at Lys-201. His-294 functions as the Proton acceptor in the catalytic mechanism. The substrate site is built by Arg-295, His-327, and Ser-379.

Belongs to the RuBisCO large chain family. Type I subfamily. Heterohexadecamer of 8 large chains and 8 small chains; disulfide-linked. The disulfide link is formed within the large subunit homodimers. It depends on Mg(2+) as a cofactor. In terms of processing, the disulfide bond which can form in the large chain dimeric partners within the hexadecamer appears to be associated with oxidative stress and protein turnover.

The protein resides in the plastid. Its subcellular location is the chloroplast. The enzyme catalyses 2 (2R)-3-phosphoglycerate + 2 H(+) = D-ribulose 1,5-bisphosphate + CO2 + H2O. The catalysed reaction is D-ribulose 1,5-bisphosphate + O2 = 2-phosphoglycolate + (2R)-3-phosphoglycerate + 2 H(+). Functionally, ruBisCO catalyzes two reactions: the carboxylation of D-ribulose 1,5-bisphosphate, the primary event in carbon dioxide fixation, as well as the oxidative fragmentation of the pentose substrate in the photorespiration process. Both reactions occur simultaneously and in competition at the same active site. The polypeptide is Ribulose bisphosphate carboxylase large chain (Chloranthus spicatus (Chulantree)).